We begin with the raw amino-acid sequence, 205 residues long: Large ribosomal subunit protein uL18 (205 aa).

This sequence belongs to the universal ribosomal protein uL18 family. As to quaternary structure, part of the 50S ribosomal subunit. Contacts the 5S and 23S rRNAs.

Its function is as follows. This is one of the proteins that bind and probably mediate the attachment of the 5S RNA into the large ribosomal subunit, where it forms part of the central protuberance. The sequence is that of Large ribosomal subunit protein uL18 from Pyrobaculum islandicum (strain DSM 4184 / JCM 9189 / GEO3).